The sequence spans 169 residues: Gastrula zinc finger protein XlCGF62.1 (169 aa).

6 consecutive C2H2-type zinc fingers follow at residues 6–28 (FICTECGKCFSEKRTLKHHIRTH), 34–56 (FICTDCGKCFSFEICLNRHYKTH), 62–84 (FICTECGKSFSDKSRLRVHHRSH), 90–113 (FTCTDCGKCFSVKSILNHHRQAIH), 119–141 (FICTECGKGFASKHYLHGHKRTH), and 147–169 (FVCTECGKGFASNYYLHVHKRTH).

The protein belongs to the krueppel C2H2-type zinc-finger protein family.

The protein resides in the nucleus. Its function is as follows. May be involved in transcriptional regulation. In Xenopus laevis (African clawed frog), this protein is Gastrula zinc finger protein XlCGF62.1.